A 220-amino-acid chain; its full sequence is Adapter protein MecA (220 aa).

It belongs to the MecA family. Homodimer.

Enables the recognition and targeting of unfolded and aggregated proteins to the ClpC protease or to other proteins involved in proteolysis. This Macrococcus caseolyticus (strain JCSC5402) (Macrococcoides caseolyticum) protein is Adapter protein MecA.